Reading from the N-terminus, the 67-residue chain is DNA-directed RNA polymerase subunit omega (67 aa).

The protein belongs to the RNA polymerase subunit omega family. As to quaternary structure, the RNAP catalytic core consists of 2 alpha, 1 beta, 1 beta' and 1 omega subunit. When a sigma factor is associated with the core the holoenzyme is formed, which can initiate transcription.

It carries out the reaction RNA(n) + a ribonucleoside 5'-triphosphate = RNA(n+1) + diphosphate. Its function is as follows. Promotes RNA polymerase assembly. Latches the N- and C-terminal regions of the beta' subunit thereby facilitating its interaction with the beta and alpha subunits. This is DNA-directed RNA polymerase subunit omega from Legionella pneumophila (strain Paris).